Here is a 101-residue protein sequence, read N- to C-terminus: uncharacterized protein (101 aa).

A helical transmembrane segment spans residues 58–80 (VFPSLNIIILMSDALMFFLRSSI).

It localises to the membrane. This is an uncharacterized protein from Saccharomyces cerevisiae (strain ATCC 204508 / S288c) (Baker's yeast).